The following is a 113-amino-acid chain: Hydrogenase maturation factor HypA (113 aa).

His2 lines the Ni(2+) pocket. Zn(2+)-binding residues include Cys73, Cys76, Cys89, and Cys92.

Belongs to the HypA/HybF family.

Its function is as follows. Involved in the maturation of [NiFe] hydrogenases. Required for nickel insertion into the metal center of the hydrogenase. The polypeptide is Hydrogenase maturation factor HypA (Albidiferax ferrireducens (strain ATCC BAA-621 / DSM 15236 / T118) (Rhodoferax ferrireducens)).